The following is a 181-amino-acid chain: Resolvase/recombinase (181 aa).

Residues 2-137 (RLFGYARVST…EGRLEAKAKG (136 aa)) form the Resolvase/invertase-type recombinase catalytic domain. Residue S10 is the O-(5'-phospho-DNA)-serine intermediate of the active site. Positions 161–180 (AMEIAKRLKIGRSTVYKVLA) form a DNA-binding region, H-T-H motif.

The protein belongs to the site-specific recombinase resolvase family.

Functionally, site-specific recombination protein. The polypeptide is Resolvase/recombinase (Pseudomonas putida (Arthrobacter siderocapsulatus)).